Consider the following 197-residue polypeptide: NADH-quinone oxidoreductase subunit C (197 aa).

It belongs to the complex I 30 kDa subunit family. NDH-1 is composed of 14 different subunits. Subunits NuoB, C, D, E, F, and G constitute the peripheral sector of the complex.

Its subcellular location is the cell inner membrane. It carries out the reaction a quinone + NADH + 5 H(+)(in) = a quinol + NAD(+) + 4 H(+)(out). NDH-1 shuttles electrons from NADH, via FMN and iron-sulfur (Fe-S) centers, to quinones in the respiratory chain. The immediate electron acceptor for the enzyme in this species is believed to be ubiquinone. Couples the redox reaction to proton translocation (for every two electrons transferred, four hydrogen ions are translocated across the cytoplasmic membrane), and thus conserves the redox energy in a proton gradient. This chain is NADH-quinone oxidoreductase subunit C, found in Methylobacillus flagellatus (strain ATCC 51484 / DSM 6875 / VKM B-1610 / KT).